Here is a 275-residue protein sequence, read N- to C-terminus: 2,3,4,5-tetrahydropyridine-2,6-dicarboxylate N-succinyltransferase (275 aa).

Substrate-binding residues include arginine 104 and aspartate 141.

The protein belongs to the transferase hexapeptide repeat family. Homotrimer.

Its subcellular location is the cytoplasm. It catalyses the reaction (S)-2,3,4,5-tetrahydrodipicolinate + succinyl-CoA + H2O = (S)-2-succinylamino-6-oxoheptanedioate + CoA. It participates in amino-acid biosynthesis; L-lysine biosynthesis via DAP pathway; LL-2,6-diaminopimelate from (S)-tetrahydrodipicolinate (succinylase route): step 1/3. The polypeptide is 2,3,4,5-tetrahydropyridine-2,6-dicarboxylate N-succinyltransferase (Actinobacillus succinogenes (strain ATCC 55618 / DSM 22257 / CCUG 43843 / 130Z)).